The sequence spans 700 residues: Elongation factor G 1 (700 aa).

A tr-type G domain is found at 8-290 (QNYRNIGISA…AVIEFMPSPI (283 aa)). Residues 17 to 24 (AHIDAGKT), 88 to 92 (DTPGH), and 142 to 145 (NKMD) contribute to the GTP site.

It belongs to the TRAFAC class translation factor GTPase superfamily. Classic translation factor GTPase family. EF-G/EF-2 subfamily.

It localises to the cytoplasm. Catalyzes the GTP-dependent ribosomal translocation step during translation elongation. During this step, the ribosome changes from the pre-translocational (PRE) to the post-translocational (POST) state as the newly formed A-site-bound peptidyl-tRNA and P-site-bound deacylated tRNA move to the P and E sites, respectively. Catalyzes the coordinated movement of the two tRNA molecules, the mRNA and conformational changes in the ribosome. The chain is Elongation factor G 1 from Polaromonas sp. (strain JS666 / ATCC BAA-500).